Here is a 196-residue protein sequence, read N- to C-terminus: Aequorin-2 (196 aa).

Positions 1 to 7 are excised as a propeptide; sequence MTSKQYS. EF-hand domains are found at residues 18 to 53, 54 to 108, 117 to 146, and 147 to 182; these read RWIG…IVIN, NLGA…AKNE, DALF…AGII, and QSSE…FWYT. Ca(2+) is bound by residues Asp-31, Asn-33, Asn-35, Lys-37, and Glu-42. May interact with the chromophore regions lie at residues 47–57, 62–72, and 107–117; these read ASDIVINNLGA, AKRHKDAVEAF, and NEPTLIRIWGD. Asp-124, Asp-126, Asn-128, Glu-135, Asp-160, Asp-162, Ser-164, Gln-166, and Glu-171 together coordinate Ca(2+).

Belongs to the aequorin family. In terms of processing, the reduction of the disulfide bond is necessary to regenerate aequorin from apoaequorin.

Functionally, ca(2+)-dependent bioluminescence photoprotein. Displays an emission peak at 470 nm (blue light). Trace amounts of calcium ion trigger the intramolecular oxidation of the chromophore, coelenterazine into coelenteramide and CO(2) with the concomitant emission of light. This Aequorea victoria (Water jellyfish) protein is Aequorin-2.